The sequence spans 231 residues: Large ribosomal subunit protein uL3 (231 aa).

Q151 bears the N5-methylglutamine mark.

The protein belongs to the universal ribosomal protein uL3 family. In terms of assembly, part of the 50S ribosomal subunit. Forms a cluster with proteins L14 and L19. In terms of processing, methylated by PrmB.

In terms of biological role, one of the primary rRNA binding proteins, it binds directly near the 3'-end of the 23S rRNA, where it nucleates assembly of the 50S subunit. The protein is Large ribosomal subunit protein uL3 of Ehrlichia canis (strain Jake).